We begin with the raw amino-acid sequence, 208 residues long: MRGKFIVLEGLEGAGKTTAHQVILAQLEKAGKNVVQTREPGGTPLAEKLRHLIKHETEEAVSDKAELLMLYAARIQLVENVIKPALAEGKWVLGDRHDMSSQAYQGGGRQIDRHLLETLKETVLGNFEPDLTIYLDIDPAVGLARARGRGELDRIEQQSLDFFYRTRQRYLELTQNNEKAVIINAEQSIEQVAADIQQAVENFLKIAK.

10 to 17 is an ATP binding site; the sequence is GLEGAGKT.

This sequence belongs to the thymidylate kinase family.

It carries out the reaction dTMP + ATP = dTDP + ADP. Phosphorylation of dTMP to form dTDP in both de novo and salvage pathways of dTTP synthesis. This Actinobacillus pleuropneumoniae serotype 5b (strain L20) protein is Thymidylate kinase.